Consider the following 289-residue polypeptide: Acetyl-coenzyme A carboxylase carboxyl transferase subunit beta (289 aa).

The 262-residue stretch at 28-289 (VMTKCPECKK…QGGGMAVWQS (262 aa)) folds into the CoA carboxyltransferase N-terminal domain. The Zn(2+) site is built by Cys-32, Cys-35, Cys-51, and Cys-54. The C4-type zinc-finger motif lies at 32-54 (CPECKKIMYTKELLKNLKVCVNC).

It belongs to the AccD/PCCB family. Acetyl-CoA carboxylase is a heterohexamer composed of biotin carboxyl carrier protein (AccB), biotin carboxylase (AccC) and two subunits each of ACCase subunit alpha (AccA) and ACCase subunit beta (AccD). Zn(2+) serves as cofactor.

It localises to the cytoplasm. It catalyses the reaction N(6)-carboxybiotinyl-L-lysyl-[protein] + acetyl-CoA = N(6)-biotinyl-L-lysyl-[protein] + malonyl-CoA. Its pathway is lipid metabolism; malonyl-CoA biosynthesis; malonyl-CoA from acetyl-CoA: step 1/1. Its function is as follows. Component of the acetyl coenzyme A carboxylase (ACC) complex. Biotin carboxylase (BC) catalyzes the carboxylation of biotin on its carrier protein (BCCP) and then the CO(2) group is transferred by the transcarboxylase to acetyl-CoA to form malonyl-CoA. This Bacillus cereus (strain G9842) protein is Acetyl-coenzyme A carboxylase carboxyl transferase subunit beta.